The primary structure comprises 840 residues: Protein translocase subunit SecA (840 aa).

Residues Q85, 103 to 107 (GEGKT), and D492 contribute to the ATP site. A disordered region spans residues 787-822 (QRERVAKETGASHGGDSQEVKKKPVKKEPKVGRNDL). Residues 802–819 (DSQEVKKKPVKKEPKVGR) show a composition bias toward basic and acidic residues. The Zn(2+) site is built by C823, C825, C834, and C835.

The protein belongs to the SecA family. In terms of assembly, monomer and homodimer. Part of the essential Sec protein translocation apparatus which comprises SecA, SecYEG and auxiliary proteins SecDF. Other proteins may also be involved. The cofactor is Zn(2+).

The protein resides in the cell membrane. The protein localises to the cytoplasm. It carries out the reaction ATP + H2O + cellular proteinSide 1 = ADP + phosphate + cellular proteinSide 2.. In terms of biological role, part of the Sec protein translocase complex. Interacts with the SecYEG preprotein conducting channel. Has a central role in coupling the hydrolysis of ATP to the transfer of proteins into and across the cell membrane, serving as an ATP-driven molecular motor driving the stepwise translocation of polypeptide chains across the membrane. The sequence is that of Protein translocase subunit SecA from Clostridium perfringens (strain ATCC 13124 / DSM 756 / JCM 1290 / NCIMB 6125 / NCTC 8237 / Type A).